The sequence spans 259 residues: UPF0246 protein PST_1170 (259 aa).

It belongs to the UPF0246 family.

The chain is UPF0246 protein PST_1170 from Stutzerimonas stutzeri (strain A1501) (Pseudomonas stutzeri).